The primary structure comprises 368 residues: Agmatine deiminase (368 aa).

Cysteine 357 functions as the Amidino-cysteine intermediate in the catalytic mechanism.

This sequence belongs to the agmatine deiminase family. In terms of assembly, homodimer.

It catalyses the reaction agmatine + H2O = N-carbamoylputrescine + NH4(+). The protein operates within amine and polyamine biosynthesis; putrescine biosynthesis via agmatine pathway; N-carbamoylputrescine from agmatine: step 1/1. Its function is as follows. Mediates the hydrolysis of agmatine into N-carbamoylputrescine in the arginine decarboxylase (ADC) pathway of putrescine biosynthesis, a basic polyamine. The sequence is that of Agmatine deiminase from Pseudomonas putida (strain ATCC 700007 / DSM 6899 / JCM 31910 / BCRC 17059 / LMG 24140 / F1).